The chain runs to 490 residues: AP-5 complex subunit mu-1 (490 aa).

The region spanning 206 to 476 is the MHD domain; that stretch reads KPQVSISITE…LISSDYYIWN (271 aa).

It belongs to the adaptor complexes medium subunit family. Probably part of the adaptor protein complex 5 (AP-5) a tetramer composed of AP5B1, AP5M1, AP5S1 and AP5Z1. Expressed in various tumor cell lines including Jurkat, Hep-G2 and HeLa.

The protein resides in the cytoplasm. It localises to the cytosol. The protein localises to the late endosome membrane. It is found in the lysosome membrane. In terms of biological role, as part of AP-5, a probable fifth adaptor protein complex it may be involved in endosomal transport. According to PubMed:18395520, it may play a role in cell death. The sequence is that of AP-5 complex subunit mu-1 (AP5M1) from Homo sapiens (Human).